The following is a 296-amino-acid chain: D-alanine--D-alanine ligase (296 aa).

Positions 103–293 (KEILMHHRMP…FDSFVKRIIE (191 aa)) constitute an ATP-grasp domain. ATP is bound at residue 129–180 (ISFPVAVKPSSGGSSIATFKVKSIQELKHAYEEASKYGEVMIEQWVTGKEIT). D247, E260, and N262 together coordinate Mg(2+).

It belongs to the D-alanine--D-alanine ligase family. It depends on Mg(2+) as a cofactor. Mn(2+) is required as a cofactor.

The protein localises to the cytoplasm. The enzyme catalyses 2 D-alanine + ATP = D-alanyl-D-alanine + ADP + phosphate + H(+). It participates in cell wall biogenesis; peptidoglycan biosynthesis. In terms of biological role, cell wall formation. This is D-alanine--D-alanine ligase from Francisella tularensis subsp. novicida (strain U112).